Consider the following 161-residue polypeptide: Protein lin-52 (161 aa).

The tract at residues 137–161 is disordered; sequence TGSASPRYLQPTPPKNVAEETTGSQ.

This sequence belongs to the lin-52 family. Component of the DRM complex, at least composed of lin-9, lin-35, lin-37, lin-52, lin-53, lin-54- dpl-1 and efl-1. Interacts with zft-11; the interaction is required to suppress the activation of non-neuronal genes in neurons.

The protein resides in the nucleus. Functionally, synthetic multivulva class B (synMuvB) protein. SynMuvB proteins are required to repress the induction of vulval development by Ras signaling and probably act by forming the multiprotein DRM complex that represses transcription. In association with the zinc finger protein ztf-11, negatively regulates the expression of non-neuronal genes during neurogenesis. The protein is Protein lin-52 of Caenorhabditis elegans.